The primary structure comprises 474 residues: Carbohydrate sulfotransferase 3 (474 aa).

Topologically, residues 1-19 (MEKGLALPQDCRDLVHNLK) are cytoplasmic. A helical; Signal-anchor for type II membrane protein membrane pass occupies residues 20-38 (IRGRYVLFLAFVVIVFIFI). Over 39–474 (EKENKIISRV…LEERGTFWVT (436 aa)) the chain is Lumenal. Residues N63, N74, and N96 are each glycosylated (N-linked (GlcNAc...) asparagine). Residue 137–143 (TRTGSSF) coordinates 3'-phosphoadenylyl sulfate. N252 carries an N-linked (GlcNAc...) asparagine glycan. 297-305 (RDPRAVLAS) is a 3'-phosphoadenylyl sulfate binding site. N-linked (GlcNAc...) asparagine glycosylation is found at N415 and N459.

Belongs to the sulfotransferase 1 family. Gal/GlcNAc/GalNAc subfamily. N-glycosylated.

It localises to the golgi apparatus membrane. The enzyme catalyses chondroitin beta-D-glucuronate + n 3'-phosphoadenylyl sulfate = chondroitin 6'-sulfate + n adenosine 3',5'-bisphosphate + n H(+). The catalysed reaction is 3'-phosphoadenylyl sulfate + keratan = adenosine 3',5'-bisphosphate + keratan 6'-sulfate.. In terms of biological role, sulfotransferase that utilizes 3'-phospho-5'-adenylyl sulfate (PAPS) as sulfonate donor to catalyze the transfer of sulfate to position 6 of the N-acetylgalactosamine (GalNAc) residue of chondroitin. Chondroitin sulfate constitutes the predominant proteoglycan present in cartilage and is distributed on the surfaces of many cells and extracellular matrices. Catalyzes with a lower efficiency the sulfation of Gal residues of keratan sulfate, another glycosaminoglycan. Can also catalyze the sulfation of the Gal residues in sialyl N-acetyllactosamine (sialyl LacNAc) oligosaccharides. May play a role in the maintenance of naive T-lymphocytes in the spleen. In Rattus norvegicus (Rat), this protein is Carbohydrate sulfotransferase 3 (Chst3).